Consider the following 483-residue polypeptide: Septin-8 (483 aa).

The span at 1 to 16 (MAATDLERFSNAEPEP) shows a compositional bias: basic and acidic residues. The tract at residues 1–22 (MAATDLERFSNAEPEPRSLSLG) is disordered. Alanine 2 is subject to N-acetylalanine. The residue at position 10 (serine 10) is a Phosphoserine. Positions 41–307 (QGFSFNILCV…ELYRRCKLEE (267 aa)) constitute a Septin-type G domain. Residues 51–58 (GETGIGKS) are G1 motif. GTP contacts are provided by residues 51–58 (GETGIGKS), glycine 106, 187–195 (KADTISKSE), glycine 241, and arginine 256. The segment at 103-106 (DAVG) is G3 motif. The segment at 186–189 (AKAD) is G4 motif. Residues 320 to 413 (FSLQETYEAK…AVEALQSQAL (94 aa)) are a coiled coil. Residues 411–420 (QALHATSQQP) are compositionally biased toward polar residues. The tract at residues 411–443 (QALHATSQQPLRKDKDKKNRSDIGAHQPGMSLS) is disordered. The segment covering 421-433 (LRKDKDKKNRSDI) has biased composition (basic and acidic residues).

Belongs to the TRAFAC class TrmE-Era-EngA-EngB-Septin-like GTPase superfamily. Septin GTPase family. As to quaternary structure, septins polymerize into heterooligomeric protein complexes that form filaments, and can associate with cellular membranes, actin filaments and microtubules. GTPase activity is required for filament formation. Interacts with CDK14. Interacts with SEPTIN5. Interacts with SEPTIN7. Interacts with SEPTIN4. Interacts with VAMP2; the interaction inhibits interaction of VAMP2 with SYP. Interacts with STX1A. As to expression, widely expressed, including in brain, heart and platelets; most abundant in aorta. Isoform 2 is expressed at low levels in specific brain areas, such as occipital pole, frontal lobe, temporal lobe and putamen. Isoform 1 and 3 are highly expressed in specific brain areas, such as occipital pole, frontal lobe, temporal lobe and putamen. Isoform 2 is highly expressed in prostate, testis and ovary. Isoform 1 and isoform 3 are expressed at low levels in prostate, testis and ovary.

It localises to the cytoplasm. It is found in the cytoskeleton. The protein localises to the synapse. The protein resides in the cell projection. Its subcellular location is the axon. It localises to the cytoplasmic vesicle. It is found in the secretory vesicle. The protein localises to the synaptic vesicle membrane. The protein resides in the presynapse. Its function is as follows. Filament-forming cytoskeletal GTPase. May play a role in platelet secretion. Seems to participate in the process of SNARE complex formation in synaptic vesicles. Stabilizes BACE1 protein levels and promotes the sorting and accumulation of BACE1 to the recycling or endosomal compartments, modulating the beta-amyloidogenic processing of APP. In Homo sapiens (Human), this protein is Septin-8.